The chain runs to 200 residues: Endochitinase (200 aa).

The Proton donor role is filled by Glu-58.

The protein belongs to the glycosyl hydrolase 19 family. Chitinase class I subfamily.

The enzyme catalyses Random endo-hydrolysis of N-acetyl-beta-D-glucosaminide (1-&gt;4)-beta-linkages in chitin and chitodextrins.. This protein functions as a defense against chitin-containing fungal pathogens. This chain is Endochitinase, found in Avena sativa (Oat).